The primary structure comprises 196 residues: Nodulation protein A (196 aa).

Belongs to the NodA family.

The protein localises to the cytoplasm. In terms of biological role, N-acyltransferase required for nodulation. Acts in the production of a small, heat-stable compound (Nod) that stimulates mitosis in various plant protoplasts. This is Nodulation protein A from Sinorhizobium terangae.